A 1785-amino-acid polypeptide reads, in one-letter code: Brefeldin A-inhibited guanine nucleotide-exchange protein 2 (1785 aa).

Position 1 is an N-acetylmethionine (methionine 1). The tract at residues 2 to 224 (QESQTKSMFV…KPQSPVIQAA (223 aa)) is DCB; DCB:DCB domain and DCB:HUS domain interaction. 3 positions are modified to phosphoserine: serine 214, serine 218, and serine 227. Positions 232–285 (RLKHSQAQSKPTTPEKTDLTNGEHARSDSGKVSTENGDAPRERGSSLSGTDDGA) are disordered. Threonine 244 bears the Phosphothreonine mark. Over residues 244-260 (TPEKTDLTNGEHARSDS) the composition is skewed to basic and acidic residues. A phosphoserine mark is found at serine 277, serine 348, and serine 349. The segment at 508 to 528 (ADAQCVVDIYVNYDCDLNAAN) is HUS; DCB:HUS domain interaction. At serine 614 the chain carries Phosphoserine. At threonine 616 the chain carries Phosphothreonine. A Phosphoserine modification is found at serine 617. The residue at position 626 (threonine 626) is a Phosphothreonine. The region spanning 654-785 (FNKKPKRGIQ…IIMLTTDLHS (132 aa)) is the SEC7 domain. A phosphoserine mark is found at serine 700, serine 1511, serine 1513, serine 1514, serine 1525, serine 1528, serine 1534, and serine 1782. Residues 1514–1532 (SIDKNPSERGQSQLSNPTD) are compositionally biased toward polar residues. The segment at 1514–1535 (SIDKNPSERGQSQLSNPTDDSW) is disordered.

As to quaternary structure, homodimer. Interacts with ARFGEF1/BIG1; both proteins are probably part of the same or very similar macromolecular complexes. Interacts with PRKAR1A, PRKAR2A, PRKAR1B, PRKAR2B, PPP1CC, PDE3A, TNFRSF1A, MYCBP and EXOC7. Interacts with GABRB1, GABRB2 and GABRB3. In terms of processing, in vitro phosphorylated by PKA reducing its GEF activity and dephosphorylated by phosphatase PP1. In terms of tissue distribution, expressed in placenta, lung, heart, brain, kidney and pancreas.

It is found in the cytoplasm. The protein resides in the membrane. The protein localises to the golgi apparatus. Its subcellular location is the perinuclear region. It localises to the trans-Golgi network. It is found in the endosome. The protein resides in the cytoskeleton. The protein localises to the microtubule organizing center. Its subcellular location is the centrosome. It localises to the cell projection. It is found in the dendrite. The protein resides in the cytoplasmic vesicle. The protein localises to the synapse. Its activity is regulated as follows. Inhibited by brefeldin A. Functionally, promotes guanine-nucleotide exchange on ARF1 and ARF3 and to a lower extent on ARF5 and ARF6. Promotes the activation of ARF1/ARF5/ARF6 through replacement of GDP with GTP. Involved in the regulation of Golgi vesicular transport. Required for the integrity of the endosomal compartment. Involved in trafficking from the trans-Golgi network (TGN) to endosomes and is required for membrane association of the AP-1 complex and GGA1. Seems to be involved in recycling of the transferrin receptor from recycling endosomes to the plasma membrane. Probably is involved in the exit of GABA(A) receptors from the endoplasmic reticulum. Involved in constitutive release of tumor necrosis factor receptor 1 via exosome-like vesicles; the function seems to involve PKA and specifically PRKAR2B. Proposed to act as A kinase-anchoring protein (AKAP) and may mediate crosstalk between Arf and PKA pathways. This Homo sapiens (Human) protein is Brefeldin A-inhibited guanine nucleotide-exchange protein 2 (ARFGEF2).